The chain runs to 466 residues: Exodeoxyribonuclease 7 large subunit (466 aa).

The protein belongs to the XseA family. In terms of assembly, heterooligomer composed of large and small subunits.

It is found in the cytoplasm. The enzyme catalyses Exonucleolytic cleavage in either 5'- to 3'- or 3'- to 5'-direction to yield nucleoside 5'-phosphates.. Functionally, bidirectionally degrades single-stranded DNA into large acid-insoluble oligonucleotides, which are then degraded further into small acid-soluble oligonucleotides. The protein is Exodeoxyribonuclease 7 large subunit of Ruthia magnifica subsp. Calyptogena magnifica.